A 478-amino-acid polypeptide reads, in one-letter code: Protein nucleotidyltransferase YdiU (478 aa).

ATP-binding residues include G84, G86, R87, K107, D119, G120, R170, and R177. The Proton acceptor role is filled by D246. Residues N247 and D256 each contribute to the Mg(2+) site. An ATP-binding site is contributed by D256.

The protein belongs to the SELO family. Requires Mg(2+) as cofactor. Mn(2+) serves as cofactor.

It catalyses the reaction L-seryl-[protein] + ATP = 3-O-(5'-adenylyl)-L-seryl-[protein] + diphosphate. The enzyme catalyses L-threonyl-[protein] + ATP = 3-O-(5'-adenylyl)-L-threonyl-[protein] + diphosphate. It carries out the reaction L-tyrosyl-[protein] + ATP = O-(5'-adenylyl)-L-tyrosyl-[protein] + diphosphate. The catalysed reaction is L-histidyl-[protein] + UTP = N(tele)-(5'-uridylyl)-L-histidyl-[protein] + diphosphate. It catalyses the reaction L-seryl-[protein] + UTP = O-(5'-uridylyl)-L-seryl-[protein] + diphosphate. The enzyme catalyses L-tyrosyl-[protein] + UTP = O-(5'-uridylyl)-L-tyrosyl-[protein] + diphosphate. Functionally, nucleotidyltransferase involved in the post-translational modification of proteins. It can catalyze the addition of adenosine monophosphate (AMP) or uridine monophosphate (UMP) to a protein, resulting in modifications known as AMPylation and UMPylation. The protein is Protein nucleotidyltransferase YdiU of Escherichia coli O6:K15:H31 (strain 536 / UPEC).